Here is a 492-residue protein sequence, read N- to C-terminus: Glutamyl-tRNA(Gln) amidotransferase subunit A, mitochondrial (492 aa).

Active-site charge relay system residues include Lys78 and Ser159. The Acyl-ester intermediate role is filled by Ser183.

Belongs to the amidase family. GatA subfamily. Subunit of the heterotrimeric GatCAB amidotransferase (AdT) complex, composed of A, B and C subunits.

The protein localises to the mitochondrion. It catalyses the reaction L-glutamyl-tRNA(Gln) + L-glutamine + ATP + H2O = L-glutaminyl-tRNA(Gln) + L-glutamate + ADP + phosphate + H(+). Functionally, allows the formation of correctly charged Gln-tRNA(Gln) through the transamidation of misacylated Glu-tRNA(Gln) in the mitochondria. The reaction takes place in the presence of glutamine and ATP through an activated gamma-phospho-Glu-tRNA(Gln). In Anopheles gambiae (African malaria mosquito), this protein is Glutamyl-tRNA(Gln) amidotransferase subunit A, mitochondrial.